A 347-amino-acid chain; its full sequence is Ketol-acid reductoisomerase (NADP(+)) (347 aa).

Residues 3-182 (TKMFYDKDID…GSGRAGILET (180 aa)) form the KARI N-terminal Rossmann domain. NADP(+)-binding positions include 26-29 (YGAQ), R49, S53, and 83-86 (DELQ). Residue H108 is part of the active site. G134 contributes to the NADP(+) binding site. The KARI C-terminal knotted domain occupies 183–328 (TFEEETTEDL…KKVRAMMPWI (146 aa)). D191, E195, E227, and E231 together coordinate Mg(2+). S252 provides a ligand contact to substrate.

It belongs to the ketol-acid reductoisomerase family. Requires Mg(2+) as cofactor.

It carries out the reaction (2R)-2,3-dihydroxy-3-methylbutanoate + NADP(+) = (2S)-2-acetolactate + NADPH + H(+). The catalysed reaction is (2R,3R)-2,3-dihydroxy-3-methylpentanoate + NADP(+) = (S)-2-ethyl-2-hydroxy-3-oxobutanoate + NADPH + H(+). It participates in amino-acid biosynthesis; L-isoleucine biosynthesis; L-isoleucine from 2-oxobutanoate: step 2/4. The protein operates within amino-acid biosynthesis; L-valine biosynthesis; L-valine from pyruvate: step 2/4. Functionally, involved in the biosynthesis of branched-chain amino acids (BCAA). Catalyzes an alkyl-migration followed by a ketol-acid reduction of (S)-2-acetolactate (S2AL) to yield (R)-2,3-dihydroxy-isovalerate. In the isomerase reaction, S2AL is rearranged via a Mg-dependent methyl migration to produce 3-hydroxy-3-methyl-2-ketobutyrate (HMKB). In the reductase reaction, this 2-ketoacid undergoes a metal-dependent reduction by NADPH to yield (R)-2,3-dihydroxy-isovalerate. This Leuconostoc mesenteroides subsp. mesenteroides (strain ATCC 8293 / DSM 20343 / BCRC 11652 / CCM 1803 / JCM 6124 / NCDO 523 / NBRC 100496 / NCIMB 8023 / NCTC 12954 / NRRL B-1118 / 37Y) protein is Ketol-acid reductoisomerase (NADP(+)).